A 138-amino-acid polypeptide reads, in one-letter code: Actin-related protein 2/3 complex subunit 5 (138 aa).

A disordered region spans residues 1–21 (MNYEDDNVESGQAGKSDAEYK).

Belongs to the ARPC5 family. Component of the Arp2/3 complex composed of arpB/Arp2, arpC/Arp3, arcA/p41-arc, arcB/p34-arc, arcC/p21-arc, arcD/p20-arc and arcE/p16-arc. Interacts with carmil (via the region between the LRR domain and COOH-terminal proline-rich domain); carmil is required for Arp2/3-dependent actin nucleation. Arp2/3 complex, MyoB, MyoC, and the alpha and beta subunits of capping protein all form a larger complex with carmil.

The protein localises to the cytoplasm. It localises to the cytoskeleton. Its subcellular location is the cytosol. The protein resides in the cell cortex. It is found in the cell projection. The protein localises to the pseudopodium. Its function is as follows. Functions as a component of the Arp2/3 complex which is involved in regulation of actin polymerization and together with an activating nucleation-promoting factor (NPF) mediates the formation of branched actin networks. Seems to contact the pointed end of the daughter actin filament. The Arp2/3 complex is involved in organizing the actin system in cell motility and chemotaxis, in phagocytosis and macropinocytosis, at late steps of endosome processing, and in mitosis. In concert with a group of other proteins, the Arp2/3 complex plays a general role in the rapid activation and adaptation of the actin system to its multiple functions. The chain is Actin-related protein 2/3 complex subunit 5 (arcE) from Dictyostelium discoideum (Social amoeba).